Here is a 335-residue protein sequence, read N- to C-terminus: 4-hydroxythreonine-4-phosphate dehydrogenase (335 aa).

Substrate is bound by residues His135 and Thr136. His165, His210, and His265 together coordinate a divalent metal cation. Residues Lys273, Asn282, and Arg291 each contribute to the substrate site.

This sequence belongs to the PdxA family. Homodimer. The cofactor is Zn(2+). Mg(2+) is required as a cofactor. Requires Co(2+) as cofactor.

It is found in the cytoplasm. It catalyses the reaction 4-(phosphooxy)-L-threonine + NAD(+) = 3-amino-2-oxopropyl phosphate + CO2 + NADH. It participates in cofactor biosynthesis; pyridoxine 5'-phosphate biosynthesis; pyridoxine 5'-phosphate from D-erythrose 4-phosphate: step 4/5. In terms of biological role, catalyzes the NAD(P)-dependent oxidation of 4-(phosphooxy)-L-threonine (HTP) into 2-amino-3-oxo-4-(phosphooxy)butyric acid which spontaneously decarboxylates to form 3-amino-2-oxopropyl phosphate (AHAP). This Saccharophagus degradans (strain 2-40 / ATCC 43961 / DSM 17024) protein is 4-hydroxythreonine-4-phosphate dehydrogenase.